Here is a 255-residue protein sequence, read N- to C-terminus: 5'-nucleotidase SurE (255 aa).

Residues D8, D9, S40, and N92 each contribute to the a divalent metal cation site.

Belongs to the SurE nucleotidase family. A divalent metal cation serves as cofactor.

It localises to the cytoplasm. The catalysed reaction is a ribonucleoside 5'-phosphate + H2O = a ribonucleoside + phosphate. Functionally, nucleotidase that shows phosphatase activity on nucleoside 5'-monophosphates. This chain is 5'-nucleotidase SurE, found in Brucella canis (strain ATCC 23365 / NCTC 10854 / RM-666).